Here is a 378-residue protein sequence, read N- to C-terminus: Zinc transporter 7 (378 aa).

At 1-37 the chain is on the cytoplasmic side; the sequence is MLPLSIKDDEYKPPKFNLFGKISGWFRSILSDKTSRN. Residues 38-58 traverse the membrane as a helical segment; it reads LFFFLCLNLSFAFVELLYGIW. Residues 59-67 lie on the Lumenal side of the membrane; the sequence is SNCLGLISD. Residues 68–88 form a helical membrane-spanning segment; sequence SFHMFFDSTAILAGLAASVIS. The Cytoplasmic portion of the chain corresponds to 89–102; the sequence is KWRDNDAFSYGYVR. A helical transmembrane segment spans residues 103 to 123; the sequence is AEVLAGFVNGLFLIFTAFFIF. Residues 124–140 are Lumenal-facing; the sequence is SEGVERALAPPDVHHER. A helical membrane pass occupies residues 141 to 161; that stretch reads LLLVSILGFVVNLVGIFVFNH. The his-rich loop stretch occupies residues 161 to 220; that stretch reads HGGHGHSHGSGHGHSHSLFNGALDHSHGHEDHCHSHGAKHGGAHSHDHDHAHGHGHLHSH. Residues 162-238 lie on the Cytoplasmic side of the membrane; the sequence is GGHGHSHGSG…AGPSRQILQG (77 aa). Residues 186-228 are disordered; that stretch reads SHGHEDHCHSHGAKHGGAHSHDHDHAHGHGHLHSHDGPSFKET. Basic and acidic residues predominate over residues 204–224; it reads HSHDHDHAHGHGHLHSHDGPS. Residues 239 to 259 traverse the membrane as a helical segment; it reads VFLHILADTLGSIGVIASAIM. The Lumenal portion of the chain corresponds to 260–264; sequence MQNFG. A helical membrane pass occupies residues 265–285; that stretch reads LMIADPICSILIAILIVVSVI. Topologically, residues 286-378 are cytoplasmic; it reads PLLRESIGIL…LYVQIDFAAM (93 aa).

Belongs to the cation diffusion facilitator (CDF) transporter (TC 2.A.4) family. SLC30A subfamily. Homooligomer.

The protein localises to the golgi apparatus membrane. Its subcellular location is the cytoplasmic vesicle. It is found in the golgi apparatus. The protein resides in the trans-Golgi network. It localises to the sarcoplasmic reticulum. The protein localises to the mitochondrion. The enzyme catalyses Zn(2+)(in) = Zn(2+)(out). Zinc ion transporter mediating zinc entry from the cytosol into the lumen of organelles along the secretory pathway. By contributing to zinc ion homeostasis within the early secretory pathway, regulates the activation and folding of enzymes like alkaline phosphatases. The sequence is that of Zinc transporter 7 from Rattus norvegicus (Rat).